The following is a 352-amino-acid chain: C-C chemokine receptor type 5 (352 aa).

The Extracellular portion of the chain corresponds to 1-30; the sequence is MDYQVSSPIYDINYYTSEPCQKINVKQIAA. Sulfotyrosine is present on tyrosine 3. O-linked (GalNAc...) serine glycosylation is found at serine 6 and serine 7. 3 positions are modified to sulfotyrosine: tyrosine 10, tyrosine 14, and tyrosine 15. 2 disulfide bridges follow: cysteine 20-cysteine 269 and cysteine 101-cysteine 178. A helical membrane pass occupies residues 31-58; it reads RLLPPLYSLVFIFGFVGNMLVILILINC. Topologically, residues 59-68 are cytoplasmic; sequence KRLKSMTDIY. A helical transmembrane segment spans residues 69-89; it reads LLNLAISDLFFLLTVPFWAHY. The Extracellular segment spans residues 90 to 102; sequence AAAQWDFGNTMCQ. The chain crosses the membrane as a helical span at residues 103 to 124; the sequence is LLTGLYFIGFFSGIFFIILLTI. The Cytoplasmic portion of the chain corresponds to 125 to 141; sequence DRYLAVVHAVFALKART. Residues 142–166 form a helical membrane-spanning segment; that stretch reads VTFGVVTSVITWVVAVFASLPGIIF. Topologically, residues 167 to 198 are extracellular; it reads TRSQKEGLHYTCSSHFPYSQYQFWKNFQTLKI. Residues 199–218 form a helical membrane-spanning segment; it reads VILGLVLPLLVMVICYSGIL. Over 219 to 235 the chain is Cytoplasmic; it reads KTLLRCRNEKKRHRAVR. The helical transmembrane segment at 236–260 threads the bilayer; it reads LIFTIMIVYFLFWAPYNIVLLLNTF. Residues 261–277 are Extracellular-facing; that stretch reads QEFFGLNNCSSSNRLDQ. A helical transmembrane segment spans residues 278-301; the sequence is AMQVTETLGMTHCCINPIIYAFVG. The Cytoplasmic portion of the chain corresponds to 302–352; sequence EKFRNYLLVFFQKHIAKRFCKCCSIFQQEAPERASSVYTRSTGEQEISVGL. 3 S-palmitoyl cysteine lipidation sites follow: cysteine 321, cysteine 323, and cysteine 324. Phosphoserine; by BARK1 is present on residues serine 336, serine 337, serine 342, and serine 349.

It belongs to the G-protein coupled receptor 1 family. Interacts with PRAF2. Efficient ligand binding to CCL3/MIP-1alpha and CCL4/MIP-1beta requires sulfation, O-glycosylation and sialic acid modifications. Glycosylation on Ser-6 is required for efficient binding of CCL4. Interacts with GRK2. Interacts with ARRB1 and ARRB2. Interacts with CNIH4. Interacts with S100A4; this interaction stimulates T-lymphocyte chemotaxis. In terms of assembly, (Microbial infection) Interacts with HIV-1 surface protein gp120. As to quaternary structure, (Microbial infection) May interact with human cytomegalovirus/HHV-5 protein UL78. In terms of processing, sulfated on at least 2 of the N-terminal tyrosines. Sulfation contributes to the efficiency of HIV-1 entry and is required for efficient binding of the chemokines, CCL3 and CCL4. Post-translationally, O-glycosylated, but not N-glycosylated. Ser-6 appears to be the major site even if Ser-7 may be also O-glycosylated. Also sialylated glycans present which contribute to chemokine binding. Thr-16 and Ser-17 may also be glycosylated and, if so, with small moieties such as a T-antigen. Palmitoylation in the C-terminal is important for cell surface expression, and to a lesser extent, for HIV entry. In terms of processing, phosphorylation on serine residues in the C-terminal is stimulated by binding CC chemokines especially by APO-RANTES. As to expression, highly expressed in spleen, thymus, in the myeloid cell line THP-1, in the promyeloblastic cell line KG-1a and on CD4+ and CD8+ T-cells. Medium levels in peripheral blood leukocytes and in small intestine. Low levels in ovary and lung.

It is found in the cell membrane. Its function is as follows. Receptor for a number of inflammatory CC-chemokines including CCL3/MIP-1-alpha, CCL4/MIP-1-beta and RANTES and subsequently transduces a signal by increasing the intracellular calcium ion level. May play a role in the control of granulocytic lineage proliferation or differentiation. Participates in T-lymphocyte migration to the infection site by acting as a chemotactic receptor. Functionally, (Microbial infection) Acts as a coreceptor (CD4 being the primary receptor) of human immunodeficiency virus-1/HIV-1. In Homo sapiens (Human), this protein is C-C chemokine receptor type 5.